The chain runs to 134 residues: Phosphoribosyl-AMP cyclohydrolase (134 aa).

Residue D80 participates in Mg(2+) binding. Residue C81 participates in Zn(2+) binding. 2 residues coordinate Mg(2+): D82 and D84. Residues C98 and C105 each coordinate Zn(2+).

It belongs to the PRA-CH family. In terms of assembly, homodimer. Mg(2+) serves as cofactor. Zn(2+) is required as a cofactor.

It is found in the cytoplasm. The catalysed reaction is 1-(5-phospho-beta-D-ribosyl)-5'-AMP + H2O = 1-(5-phospho-beta-D-ribosyl)-5-[(5-phospho-beta-D-ribosylamino)methylideneamino]imidazole-4-carboxamide. It participates in amino-acid biosynthesis; L-histidine biosynthesis; L-histidine from 5-phospho-alpha-D-ribose 1-diphosphate: step 3/9. Functionally, catalyzes the hydrolysis of the adenine ring of phosphoribosyl-AMP. The protein is Phosphoribosyl-AMP cyclohydrolase of Bordetella petrii (strain ATCC BAA-461 / DSM 12804 / CCUG 43448).